A 337-amino-acid polypeptide reads, in one-letter code: GTPase Obg (337 aa).

Positions 1–159 constitute an Obg domain; the sequence is MKFVDSASIF…LMLNMELKLM (159 aa). An OBG-type G domain is found at 160 to 323; sequence ADVGLVGFPN…LKDELWREVS (164 aa). GTP is bound by residues 166 to 173, 191 to 195, 213 to 216, 280 to 283, and 304 to 306; these read GFPNAGKS, FTTLV, DIPG, TKMD, and SAV. Serine 173 and threonine 193 together coordinate Mg(2+).

It belongs to the TRAFAC class OBG-HflX-like GTPase superfamily. OBG GTPase family. As to quaternary structure, monomer. Mg(2+) serves as cofactor.

Its subcellular location is the cytoplasm. Its function is as follows. An essential GTPase which binds GTP, GDP and possibly (p)ppGpp with moderate affinity, with high nucleotide exchange rates and a fairly low GTP hydrolysis rate. Plays a role in control of the cell cycle, stress response, ribosome biogenesis and in those bacteria that undergo differentiation, in morphogenesis control. The chain is GTPase Obg from Pelodictyon phaeoclathratiforme (strain DSM 5477 / BU-1).